The sequence spans 822 residues: Adhesion G protein-coupled receptor E2 (822 aa).

An N-terminal signal peptide occupies residues 1-18 (MGGRVFLAFCVWLTLLGA). Topologically, residues 19-530 (ETQDSRDCAR…DVQEEDPVLT (512 aa)) are extracellular. Positions 22–63 (DSRDCARWCPENSSCVNATACRCNPGFSSSSEIFTSPTEICD) constitute an EGF-like 1 domain. Cystine bridges form between Cys-26-Cys-36, Cys-30-Cys-42, Cys-44-Cys-62, Cys-68-Cys-82, and Cys-76-Cys-91. 2 N-linked (GlcNAc...) asparagine glycosylation sites follow: Asn-33 and Asn-38. The EGF-like 1; calcium-binding domain occupies 64–103 (DINECVPPSKVSCGKSSDCRNTEGSYDCVCNPGYELVSGA). Asn-108 carries N-linked (GlcNAc...) asparagine glycosylation. In terms of domain architecture, EGF-like 2; calcium-binding spans 116-159 (DVDECQQNPRLCKSYGTCVNTLGSFTCQCLPGFKFKPEDPKLCT). Cystine bridges form between Cys-120/Cys-133, Cys-127/Cys-142, Cys-144/Cys-158, Cys-164/Cys-177, and Cys-171/Cys-186. The EGF-like 3; calcium-binding domain occupies 160–198 (DVNECTSGQNPCHSSTHCLNNVGSYQCRCRPGWQPIPGS). N-linked (GlcNAc...) asparagine glycosylation is found at Asn-203, Asn-222, Asn-351, Asn-371, Asn-427, Asn-449, and Asn-453. The EGF-like 4; calcium-binding domain maps to 209–247 (DVDECSSGLHQCDNSTVCFNTVGSYTCRCRPGWEPKHGI). 2 disulfides stabilise this stretch: Cys-213-Cys-226 and Cys-220-Cys-235. Positions 351–523 (NFSYPAGTEF…AVLMAPYDVQ (173 aa)) constitute a GAIN-B domain. 2 disulfides stabilise this stretch: Cys-475/Cys-505 and Cys-493/Cys-507. Positions 475-523 (CVFWEHGQNGCGHWATTGCSTMDTRDTSTICRCTHLSSFAVLMAPYDVQ) are GPS. A helical membrane pass occupies residues 531-551 (VITYMGLSLSLLCLLLAALTF). Over 552–562 (LLCKAIQNIST) the chain is Cytoplasmic. Residues 563–583 (SLHLQLSLCLLLAHLLFLVAI) traverse the membrane as a helical segment. Residues 584-589 (DRTEHE) lie on the Extracellular side of the membrane. The chain crosses the membrane as a helical span at residues 590-610 (VLCAIIASALHYLYLAAFTWM). Residues 611 to 637 (LLEALYLFLTARNLMVVNYSSINRFTK) lie on the Cytoplasmic side of the membrane. The chain crosses the membrane as a helical span at residues 638-658 (KLMFPVAYGVPAVTVAISAAS). Residues 659–676 (RPHLYGTPSRCWLQPEKG) are Extracellular-facing. The chain crosses the membrane as a helical span at residues 677 to 697 (FIWGFLGPVCAIFSVNLALLL). The Cytoplasmic segment spans residues 698 to 728 (VTLWILKNRLSSLNNEVSTLQNTRMLAFKAT). Residues 729–749 (AQLFILGCTWCLGILQVGPAA) form a helical membrane-spanning segment. Residues 750–753 (RVMA) lie on the Extracellular side of the membrane. A helical membrane pass occupies residues 754–774 (YLFTIINSLQGVFIFLVYCLL). At 775-822 (SQQVREQYRKWSKGFRKLRTESEMHTLSSSAKRDTPKPSTPGLLGLQS) the chain is on the cytoplasmic side. A disordered region spans residues 797-822 (EMHTLSSSAKRDTPKPSTPGLLGLQS).

The protein belongs to the G-protein coupled receptor 2 family. Adhesion G-protein coupled receptor (ADGR) subfamily. As to quaternary structure, forms a heterodimer, consisting of a large extracellular region non-covalently linked to a seven-transmembrane moiety. Interacts with chondroitin sulfate; the interaction with chondroitin sulfate is calcium-dependent. Interacts with CD55. Post-translationally, autoproteolytically cleaved into 2 subunits, an extracellular alpha subunit and a seven-transmembrane beta subunit.

The protein resides in the cell membrane. It is found in the cell projection. It localises to the ruffle membrane. In terms of biological role, cell surface receptor that binds to the chondroitin sulfate moiety of glycosaminoglycan chains and promotes cell attachment. Promotes granulocyte chemotaxis, degranulation and adhesion. In macrophages, promotes the release of inflammatory cytokines, including IL8 and TNF. Signals probably through G-proteins. The chain is Adhesion G protein-coupled receptor E2 (ADGRE2) from Macaca mulatta (Rhesus macaque).